Reading from the N-terminus, the 154-residue chain is MSPAKVDVTKKADPKAKALKAAKAVKSGQIVKKPAKKIRTKVTFHRPKTLTVPRKPKYPKISATPRNKLDHYQILKYPLTTESAMKKIEDNNTLVFIVDIRADKKKIKDAVKKMYDIQTKKVNTLIRPDGTKKAYVRLTPDYDALDVANKIGII.

It belongs to the universal ribosomal protein uL23 family.

Functionally, binds to a specific region on the 26S rRNA. This Arabidopsis thaliana (Mouse-ear cress) protein is Large ribosomal subunit protein uL23y (RPL23AB).